The primary structure comprises 381 residues: Sensor histidine kinase FlgS (381 aa).

Residues 177–381 (HLAHEIRNPV…TFEIKILNAS (205 aa)) form the Histidine kinase domain. The residue at position 180 (H180) is a Phosphohistidine; by autocatalysis.

Interacts (via its C-terminal kinase domain) with FlhA (via N-terminus). Post-translationally, autophosphorylated.

It carries out the reaction ATP + protein L-histidine = ADP + protein N-phospho-L-histidine.. Its function is as follows. Member of the two-component regulatory system FlgR/FlgS that induces the transcriptional induction of the genes needed in motility and flagellar biogenesis. Also plays an essential role in bacterial survival at pH 2.5 independently of FlgR. Functions as a sensor protein kinase which is autophosphorylated at a histidine residue and transfers its phosphate group to the conserved aspartic acid residue in the regulatory domain of FlgR. In turn, FlgR functions as a transcriptional regulator initiating transcription from RpoN-dependent promoters. The sequence is that of Sensor histidine kinase FlgS (flgS) from Helicobacter pylori (strain ATCC 700392 / 26695) (Campylobacter pylori).